The chain runs to 172 residues: HAD-like hydrolase superfamily protein P8B7.31 (172 aa).

The active-site Nucleophile is the Asp14. Positions 14, 16, and 137 each coordinate Mg(2+). Residue Asp16 is the Proton donor of the active site.

This sequence belongs to the HAD-like hydrolase superfamily.

Its subcellular location is the cytoplasm. The protein resides in the nucleus. The chain is HAD-like hydrolase superfamily protein P8B7.31 from Schizosaccharomyces pombe (strain 972 / ATCC 24843) (Fission yeast).